Here is a 205-residue protein sequence, read N- to C-terminus: Small ribosomal subunit protein uS4 (205 aa).

Residues 18-46 (NIWGRPKSPVNRREYGPGQHGQRRKGKLS) form a disordered region. Residues 94–157 (RRLDTVVYRS…KQLAIVLEAN (64 aa)) form the S4 RNA-binding domain.

This sequence belongs to the universal ribosomal protein uS4 family. Part of the 30S ribosomal subunit. Contacts protein S5. The interaction surface between S4 and S5 is involved in control of translational fidelity.

One of the primary rRNA binding proteins, it binds directly to 16S rRNA where it nucleates assembly of the body of the 30S subunit. Functionally, with S5 and S12 plays an important role in translational accuracy. This Rhodopseudomonas palustris (strain BisB5) protein is Small ribosomal subunit protein uS4.